The chain runs to 365 residues: Aminomethyltransferase (365 aa).

Belongs to the GcvT family. The glycine cleavage system is composed of four proteins: P, T, L and H.

The catalysed reaction is N(6)-[(R)-S(8)-aminomethyldihydrolipoyl]-L-lysyl-[protein] + (6S)-5,6,7,8-tetrahydrofolate = N(6)-[(R)-dihydrolipoyl]-L-lysyl-[protein] + (6R)-5,10-methylene-5,6,7,8-tetrahydrofolate + NH4(+). The glycine cleavage system catalyzes the degradation of glycine. This chain is Aminomethyltransferase, found in Geobacillus thermodenitrificans (strain NG80-2).